Here is a 224-residue protein sequence, read N- to C-terminus: MKINLERLCRRLNYHFNNMAYLKQALTHCSAGSDNYERFEFLGDSILSFVIANELFNRFPLHSEGQLSRLRSFLVKGEMLAEIAREIGLGDYLFLGQGELRSGGFRRTSILADALEAILAAIYLDGGMTAAKQIILMLYSSRLDDPDLNHCLKDAKTQLQEFLQASKFALPEYVLTKVEGDEHAQIFHVTCTIEGVSQVAYGTGPNRRKAEQLAAKAMLEQLQG.

The RNase III domain maps to 5 to 127 (LERLCRRLNY…ILAAIYLDGG (123 aa)). Residue E40 coordinates Mg(2+). D44 is an active-site residue. D113 and E116 together coordinate Mg(2+). Residue E116 is part of the active site. One can recognise a DRBM domain in the interval 154 to 224 (DAKTQLQEFL…AKAMLEQLQG (71 aa)).

The protein belongs to the ribonuclease III family. Homodimer. It depends on Mg(2+) as a cofactor.

The protein localises to the cytoplasm. It catalyses the reaction Endonucleolytic cleavage to 5'-phosphomonoester.. In terms of biological role, digests double-stranded RNA. Involved in the processing of primary rRNA transcript to yield the immediate precursors to the large and small rRNAs (23S and 16S). Processes some mRNAs, and tRNAs when they are encoded in the rRNA operon. Processes pre-crRNA and tracrRNA of type II CRISPR loci if present in the organism. In Legionella pneumophila (strain Lens), this protein is Ribonuclease 3.